The chain runs to 132 residues: UPF0102 protein Ajs_0414 (132 aa).

Residues 1–23 (MGFLGKKVNGSAPARTTRAAGQA) form a disordered region.

It belongs to the UPF0102 family.

This Acidovorax sp. (strain JS42) protein is UPF0102 protein Ajs_0414.